Consider the following 235-residue polypeptide: Adapter protein MecA (235 aa).

A compositionally biased stretch (basic and acidic residues) spans 113-135 (LRQSDKGDIVKSKVSSSDHKDGS). Positions 113-136 (LRQSDKGDIVKSKVSSSDHKDGSQ) are disordered.

It belongs to the MecA family. In terms of assembly, homodimer.

Functionally, enables the recognition and targeting of unfolded and aggregated proteins to the ClpC protease or to other proteins involved in proteolysis. The chain is Adapter protein MecA from Leuconostoc mesenteroides subsp. mesenteroides (strain ATCC 8293 / DSM 20343 / BCRC 11652 / CCM 1803 / JCM 6124 / NCDO 523 / NBRC 100496 / NCIMB 8023 / NCTC 12954 / NRRL B-1118 / 37Y).